The following is a 556-amino-acid chain: 3-phosphoinositide-dependent protein kinase 1 (556 aa).

At Tyr9 the chain carries Phosphotyrosine; by SRC and INSR. At Ser25 the chain carries Phosphoserine. A disordered region spans residues 26 to 80 (PSMVRTQTESSTPPGIPGGSRQGPAMDGTAAEPRPGAGSLQHAQPPPQPRKKRPE). Over residues 28–38 (MVRTQTESSTP) the composition is skewed to polar residues. One can recognise a Protein kinase domain in the interval 82-342 (FKFGKILGEG…YGPLKAHPFF (261 aa)). Residues 92–94 (SFS) and Lys111 contribute to the ATP site. Residues 113-157 (LEKRHIIKENKVPYVTRERDVMSRLDHPFFVKLYFTFQDDEKLYF) are PIF-pocket. Residues 160 to 162 (SYA) and Glu166 contribute to the ATP site. Asp205 serves as the catalytic Proton acceptor. Positions 209 and 223 each coordinate ATP. The residue at position 241 (Ser241) is a Phosphoserine; by autocatalysis. Lys304 carries the N6-acetyllysine modification. A Phosphothreonine; by MELK modification is found at Thr354. 2 positions are modified to phosphotyrosine; by SRC and INSR: Tyr373 and Tyr376. The residue at position 393 (Ser393) is a Phosphoserine. Ser394 carries the post-translational modification Phosphoserine; by MAP3K5. Ser396 carries the post-translational modification Phosphoserine. Ser398 is modified (phosphoserine; by MAP3K5). Position 410 is a phosphoserine (Ser410). A PH domain is found at 459-550 (KMGPVDKRKG…EVWRQRYQSH (92 aa)). Ser501 carries the phosphoserine; by PKC/PRKCQ modification. Thr513 is subject to Phosphothreonine; by autocatalysis. Position 529 is a phosphoserine; by PKC/PRKCQ (Ser529).

The protein belongs to the protein kinase superfamily. AGC Ser/Thr protein kinase family. PDPK1 subfamily. As to quaternary structure, homodimer in its autoinhibited state. Active as monomer. Interacts with NPRL2, PPARG, PAK1, PTK2B, GRB14, PKN1 (via C-terminus), STRAP and IKKB. The Tyr-9 phosphorylated form interacts with SRC, RASA1 and CRK (via their SH2 domains). Interacts with SGK3 in a phosphorylation-dependent manner. The tyrosine-phosphorylated form interacts with PTPN6. The Ser-241 phosphorylated form interacts with YWHAH and YWHAQ. Binds INSR in response to insulin. Interacts (via PH domain) with SMAD3, SMAD4 and SMAD7. Interacts with PKN2; the interaction stimulates PDPK1 autophosphorylation, its PI(3,4,5)P3-dependent kinase activity toward 'Ser-473' of AKT1 but also activates its kinase activity toward PRKCD and PRKCZ. Post-translationally, phosphorylation on Ser-241 in the activation loop is required for full activity. PDPK1 itself can autophosphorylate Ser-241, leading to its own activation. Autophosphorylation is inhibited by the apoptotic C-terminus cleavage product of PKN2. Tyr-9 phosphorylation is critical for stabilization of both PDPK1 and the PDPK1/SRC complex via HSP90-mediated protection of PDPK1 degradation. Angiotensin II stimulates the tyrosine phosphorylation of PDPK1 in vascular smooth muscle in a calcium- and SRC-dependent manner. Phosphorylated on Tyr-9, Tyr-373 and Tyr-376 by INSR in response to insulin. Palmitate negatively regulates autophosphorylation at Ser-241 and palmitate-induced phosphorylation at Ser-529 and Ser-501 by PKC/PRKCQ negatively regulates its ability to phosphorylate PKB/AKT1. Phosphorylation at Thr-354 by MELK partially inhibits kinase activity, the inhibition is cooperatively enhanced by phosphorylation at Ser-394 and Ser-398 by MAP3K5. In terms of processing, autophosphorylated; autophosphorylation is inhibited by the apoptotic C-terminus cleavage product of PKN2. Monoubiquitinated in the kinase domain, deubiquitinated by USP4. As to expression, appears to be expressed ubiquitously. The Tyr-9 phosphorylated form is markedly increased in diseased tissue compared with normal tissue from lung, liver, colon and breast.

Its subcellular location is the cytoplasm. The protein localises to the nucleus. It localises to the cell membrane. The protein resides in the cell junction. It is found in the focal adhesion. It catalyses the reaction L-seryl-[protein] + ATP = O-phospho-L-seryl-[protein] + ADP + H(+). The enzyme catalyses L-threonyl-[protein] + ATP = O-phospho-L-threonyl-[protein] + ADP + H(+). Its activity is regulated as follows. Homodimerization regulates its activity by maintaining the kinase in an autoinhibitory conformation. NPRL2 down-regulates its activity by interfering with tyrosine phosphorylation at the Tyr-9, Tyr-373 and Tyr-376 residues. The 14-3-3 protein YWHAQ acts as a negative regulator by association with the residues surrounding the Ser-241 residue. STRAP positively regulates its activity by enhancing its autophosphorylation and by stimulating its dissociation from YWHAQ. SMAD2, SMAD3, SMAD4 and SMAD7 also positively regulate its activity by stimulating its dissociation from YWHAQ. Activated by phosphorylation on Tyr-9, Tyr-373 and Tyr-376 by INSR in response to insulin. Serine/threonine kinase which acts as a master kinase, phosphorylating and activating a subgroup of the AGC family of protein kinases. Its targets include: protein kinase B (PKB/AKT1, PKB/AKT2, PKB/AKT3), p70 ribosomal protein S6 kinase (RPS6KB1), p90 ribosomal protein S6 kinase (RPS6KA1, RPS6KA2 and RPS6KA3), cyclic AMP-dependent protein kinase (PRKACA), protein kinase C (PRKCD and PRKCZ), serum and glucocorticoid-inducible kinase (SGK1, SGK2 and SGK3), p21-activated kinase-1 (PAK1), TSSK3, protein kinase PKN (PKN1 and PKN2). Plays a central role in the transduction of signals from insulin by providing the activating phosphorylation to PKB/AKT1, thus propagating the signal to downstream targets controlling cell proliferation and survival, as well as glucose and amino acid uptake and storage. Negatively regulates the TGF-beta-induced signaling by: modulating the association of SMAD3 and SMAD7 with TGF-beta receptor, phosphorylating SMAD2, SMAD3, SMAD4 and SMAD7, preventing the nuclear translocation of SMAD3 and SMAD4 and the translocation of SMAD7 from the nucleus to the cytoplasm in response to TGF-beta. Activates PPARG transcriptional activity and promotes adipocyte differentiation. Activates the NF-kappa-B pathway via phosphorylation of IKKB. The tyrosine phosphorylated form is crucial for the regulation of focal adhesions by angiotensin II. Controls proliferation, survival, and growth of developing pancreatic cells. Participates in the regulation of Ca(2+) entry and Ca(2+)-activated K(+) channels of mast cells. Essential for the motility of vascular endothelial cells (ECs) and is involved in the regulation of their chemotaxis. Plays a critical role in cardiac homeostasis by serving as a dual effector for cell survival and beta-adrenergic response. Plays an important role during thymocyte development by regulating the expression of key nutrient receptors on the surface of pre-T cells and mediating Notch-induced cell growth and proliferative responses. Provides negative feedback inhibition to toll-like receptor-mediated NF-kappa-B activation in macrophages. In terms of biological role, catalytically inactive. The polypeptide is 3-phosphoinositide-dependent protein kinase 1 (PDPK1) (Homo sapiens (Human)).